A 66-amino-acid chain; its full sequence is UPF0337 protein M6_Spy1542 (66 aa).

The span at 1–10 shows a compositional bias: basic and acidic residues; it reads MSEEKLKAKV. The tract at residues 1–22 is disordered; sequence MSEEKLKAKVEQASGSLKEGAG.

It belongs to the UPF0337 (CsbD) family.

The chain is UPF0337 protein M6_Spy1542 from Streptococcus pyogenes serotype M6 (strain ATCC BAA-946 / MGAS10394).